The sequence spans 365 residues: MTITGIIAEFNPFHNGHKYLLDQAEGLKIVAMSGNFMQRGEPAIVDKWTRAQMALENGADLVVELPFLVSVQAADFFGQGAVDILDRLGIDSLVFGTEEVRDYQKIADLYTEKGTEMEKFVENLPDSLSYPQKTQAMWKEFAGLDFSGNTPNHVLALAYAKAVAGRNIKLHPIQRQGAGYHSVNKDVDFASATALRQHQKDQDFLERFMPSVALFEQASKVIWEDYFPLLRYQILSNPDLTTIYQVNQEMAVRIKEAIKTAQSVEELVELVTTKRYTKARVRRLLTYILMQARENVLPEAIHVLGFTEKGRQHLKSLKGQVSLVSRIGKEPWDAMTQKADQIYQLGKPSIAEQNFGRVPIRIETN.

ATP is bound by residues Ile-7–Leu-20, Gly-96, Asn-152, and Arg-175.

This sequence belongs to the TmcAL family.

It localises to the cytoplasm. It catalyses the reaction cytidine(34) in elongator tRNA(Met) + acetate + ATP = N(4)-acetylcytidine(34) in elongator tRNA(Met) + AMP + diphosphate. Catalyzes the formation of N(4)-acetylcytidine (ac(4)C) at the wobble position of elongator tRNA(Met), using acetate and ATP as substrates. First activates an acetate ion to form acetyladenylate (Ac-AMP) and then transfers the acetyl group to tRNA to form ac(4)C34. The protein is tRNA(Met) cytidine acetate ligase of Streptococcus pneumoniae (strain Taiwan19F-14).